The following is a 288-amino-acid chain: MFEPVPDLNLEASVELGEVNIDQTTPMIKENSGFISRSRRLFAHRSKDDERKLALRFFLQRLYFLDHREIHYLFRCVDAVKDVTITKKNNIIVAPYIALLTIASKGCKLTETMIEAFFPELYNEHSKKFKFNSQVSIIQEKLGYQFGNYHVYDFEPYYSTVALAIRDEHSSGIFNIRQESYLVSSLSEITYRFYLINLKSDLVQWSASTGAVINQMVNTVLITVYEKLQLVIENDSQFTCSLAVESELPIKLLKDRNELFTKFINELKKTSSFKISKRDKDTLLKYFT.

The protein belongs to the orthopoxvirus OPG134 family. Heterodimer of a 45 kDa (A23R) and a 32 kDa (A8R) subunit to form the virus intermediate transcription factor (VITF)-3.

Its function is as follows. Acts with RNA polymerase to initiate transcription from intermediate gene promoters. This Vaccinia virus (strain Copenhagen) (VACV) protein is Intermediate transcription factor 3 small subunit (OPG134).